We begin with the raw amino-acid sequence, 71 residues long: Conotoxin AbVIG (71 aa).

A signal peptide spans 1–17 (VLIIAVLFLTACQLTTA). Residues 18 to 40 (ETSSRGKQKHRALRSTDKNSRMT) constitute a propeptide that is removed on maturation. Cystine bridges form between cysteine 43-cysteine 57, cysteine 50-cysteine 61, and cysteine 56-cysteine 68.

The protein belongs to the conotoxin O1 superfamily. As to expression, expressed by the venom duct.

It localises to the secreted. This chain is Conotoxin AbVIG, found in Conus abbreviatus (Abbreviated cone).